A 403-amino-acid chain; its full sequence is Coenzyme A biosynthesis bifunctional protein CoaBC (403 aa).

Residues 1 to 197 form a phosphopantothenoylcysteine decarboxylase region; it reads MISEIMHPTK…GNNLKKEGNR (197 aa). Positions 198–403 are phosphopantothenate--cysteine ligase; the sequence is VLILNGGTVE…VEKVKKLVKS (206 aa). Residues D285, K294, and F327 each contribute to the CTP site.

It in the N-terminal section; belongs to the HFCD (homo-oligomeric flavin containing Cys decarboxylase) superfamily. The protein in the C-terminal section; belongs to the PPC synthetase family. Homododecamer. The CoaC domain is responsible for dodecamer formation. Mg(2+) serves as cofactor. Requires FMN as cofactor.

The enzyme catalyses N-[(R)-4-phosphopantothenoyl]-L-cysteine + H(+) = (R)-4'-phosphopantetheine + CO2. It carries out the reaction (R)-4'-phosphopantothenate + L-cysteine + CTP = N-[(R)-4-phosphopantothenoyl]-L-cysteine + CMP + diphosphate + H(+). It functions in the pathway cofactor biosynthesis; coenzyme A biosynthesis. Its function is as follows. Catalyzes two sequential steps in the biosynthesis of coenzyme A. In the first step cysteine is conjugated to 4'-phosphopantothenate to form 4-phosphopantothenoylcysteine. In the second step the latter compound is decarboxylated to form 4'-phosphopantotheine. The protein is Coenzyme A biosynthesis bifunctional protein CoaBC of Methanocaldococcus jannaschii (strain ATCC 43067 / DSM 2661 / JAL-1 / JCM 10045 / NBRC 100440) (Methanococcus jannaschii).